Here is a 257-residue protein sequence, read N- to C-terminus: uncharacterized protein (257 aa).

Residues 6-26 traverse the membrane as a helical segment; it reads IFWLNLAAIIIISIVVSGDMF.

Belongs to the staphylococcal tandem lipoprotein family.

Its subcellular location is the cell membrane. This is an uncharacterized protein from Staphylococcus aureus (strain COL).